The following is a 511-amino-acid chain: Maturase K (511 aa).

This sequence belongs to the intron maturase 2 family. MatK subfamily.

It localises to the plastid. The protein resides in the chloroplast. In terms of biological role, usually encoded in the trnK tRNA gene intron. Probably assists in splicing its own and other chloroplast group II introns. The chain is Maturase K from Hordeum bulbosum (Bulbous barley).